Here is a 249-residue protein sequence, read N- to C-terminus: Fasciclin-like arabinogalactan protein 12 (249 aa).

An N-terminal signal peptide occupies residues Met1 to Ser24. The FAS1 domain occupies Pro37 to Leu181. 5 N-linked (GlcNAc...) asparagine glycosylation sites follow: Asn39, Asn71, Asn143, Asn152, and Asn159. The interval Val186–Ala219 is disordered. The GPI-anchor amidated aspartate moiety is linked to residue Asp220. A propeptide spans Ala221–Leu249 (removed in mature form).

The protein belongs to the fasciclin-like AGP family.

Its subcellular location is the cell membrane. Its function is as follows. May be a cell surface adhesion protein. This Arabidopsis thaliana (Mouse-ear cress) protein is Fasciclin-like arabinogalactan protein 12 (FLA12).